The chain runs to 201 residues: Potassium-transporting ATPase KdpC subunit (201 aa).

Residues 12–34 (LLALTMITGLAYPLAVTGLATVL) form a helical membrane-spanning segment. Positions 69 to 102 (RPSATVAPDPADSSKTVSAPYNAANSGGSNLGPT) are disordered. The span at 81–101 (SSKTVSAPYNAANSGGSNLGP) shows a compositional bias: polar residues.

It belongs to the KdpC family. In terms of assembly, the system is composed of three essential subunits: KdpA, KdpB and KdpC.

Its subcellular location is the cell inner membrane. Part of the high-affinity ATP-driven potassium transport (or Kdp) system, which catalyzes the hydrolysis of ATP coupled with the electrogenic transport of potassium into the cytoplasm. This subunit acts as a catalytic chaperone that increases the ATP-binding affinity of the ATP-hydrolyzing subunit KdpB by the formation of a transient KdpB/KdpC/ATP ternary complex. This Rhodopseudomonas palustris (strain TIE-1) protein is Potassium-transporting ATPase KdpC subunit.